Reading from the N-terminus, the 280-residue chain is Acetyl-coenzyme A carboxylase carboxyl transferase subunit beta (280 aa).

Residues 24-280 (AWIKCDKCKN…IYTLIRHTHG (257 aa)) form the CoA carboxyltransferase N-terminal domain. C28, C31, C47, and C50 together coordinate Zn(2+). The C4-type zinc-finger motif lies at 28 to 50 (CDKCKNILYIEDLLKNLKICPHC).

This sequence belongs to the AccD/PCCB family. In terms of assembly, acetyl-CoA carboxylase is a heterohexamer composed of biotin carboxyl carrier protein (AccB), biotin carboxylase (AccC) and two subunits each of ACCase subunit alpha (AccA) and ACCase subunit beta (AccD). Zn(2+) is required as a cofactor.

It localises to the cytoplasm. The catalysed reaction is N(6)-carboxybiotinyl-L-lysyl-[protein] + acetyl-CoA = N(6)-biotinyl-L-lysyl-[protein] + malonyl-CoA. Its pathway is lipid metabolism; malonyl-CoA biosynthesis; malonyl-CoA from acetyl-CoA: step 1/1. Component of the acetyl coenzyme A carboxylase (ACC) complex. Biotin carboxylase (BC) catalyzes the carboxylation of biotin on its carrier protein (BCCP) and then the CO(2) group is transferred by the transcarboxylase to acetyl-CoA to form malonyl-CoA. The chain is Acetyl-coenzyme A carboxylase carboxyl transferase subunit beta from Sulfurihydrogenibium sp. (strain YO3AOP1).